Here is a 282-residue protein sequence, read N- to C-terminus: Glucuronoxylan 4-O-methyltransferase 1 (282 aa).

The chain crosses the membrane as a helical span at residues 13–33 (VLLVFLLATLILIFIVRSTLT).

The protein belongs to the methyltransferase superfamily. In terms of tissue distribution, expressed in rosette leaves, stems, flowers and siliques.

The protein localises to the golgi apparatus membrane. The catalysed reaction is glucuronoxylan D-glucuronate + n S-adenosyl-L-methionine = glucuronoxylan 4-O-methyl-D-glucuronate + n S-adenosyl-L-homocysteine + n H(+). Its function is as follows. Methyltransferase catalyzing 4-O-methylation of glucuronic acid side chains on xylan. In Arabidopsis thaliana (Mouse-ear cress), this protein is Glucuronoxylan 4-O-methyltransferase 1 (GXM1).